Here is a 516-residue protein sequence, read N- to C-terminus: Lipid II flippase MurJ (516 aa).

11 helical membrane-spanning segments follow: residues 93–113 (WALA…VFAV), 133–153 (IMFP…VLNT), 159–179 (LPAF…VFVA), 188–208 (ALAW…LPGL), 233–253 (VLAK…SLII), 275–295 (LMEF…LPSL), 317–337 (VTFL…TPLT), 358–378 (LATY…APGF), 390–409 (IAIG…VPLI), 448–468 (FFVQ…WCAI), and 483–503 (IALM…MLWV).

The protein belongs to the MurJ/MviN family.

It localises to the cell inner membrane. It functions in the pathway cell wall biogenesis; peptidoglycan biosynthesis. Involved in peptidoglycan biosynthesis. Transports lipid-linked peptidoglycan precursors from the inner to the outer leaflet of the cytoplasmic membrane. The protein is Lipid II flippase MurJ of Burkholderia cenocepacia (strain ATCC BAA-245 / DSM 16553 / LMG 16656 / NCTC 13227 / J2315 / CF5610) (Burkholderia cepacia (strain J2315)).